The following is a 759-amino-acid chain: Holliday junction resolvase YEN1 (759 aa).

Disordered stretches follow at residues 62 to 83 (RSRS…SQEY), 498 to 518 (SQSP…TRRQ), and 683 to 702 (KSRT…KSRS). Over residues 500-512 (SPLKRSNSPSRSK) the composition is skewed to low complexity. S730 and S731 each carry phosphoserine.

The protein belongs to the XPG/RAD2 endonuclease family. GEN subfamily.

Its subcellular location is the cytoplasm. It is found in the nucleus. Its function is as follows. Endonuclease which resolves Holliday junctions by the introduction of symmetrically related cuts across the junction point, to produce nicked duplex products in which the nicks can be readily ligated. Four-way DNA intermediates, also known as Holliday junctions, are formed during homologous recombination and DNA repair, and their resolution is necessary for proper chromosome segregation. Involved in DNA-damage repair in vegetative cells. This chain is Holliday junction resolvase YEN1 (YEN1), found in Saccharomyces cerevisiae (strain ATCC 204508 / S288c) (Baker's yeast).